A 1113-amino-acid polypeptide reads, in one-letter code: Receptor-type guanylate cyclase gcy-18 (1113 aa).

Positions 1 to 18 (MLKTLLFILIFFNIPIIA) are cleaved as a signal peptide. Topologically, residues 19–499 (IEEIPDIKEN…RGQRCSYLLE (481 aa)) are extracellular. N-linked (GlcNAc...) asparagine glycosylation is found at asparagine 72, asparagine 369, and asparagine 456. The helical transmembrane segment at 500-520 (ISVGSLIILLILISVVFFFLF) threads the bilayer. Over 521–1113 (RYCENKQLEK…TNYIQNVEGV (593 aa)) the chain is Cytoplasmic. Residues 543 to 848 (IDEEQVKSMM…RVRLNTEMVL (306 aa)) form the Protein kinase domain. Residues 853-884 (SLVDQMMKMMEQYANNLEKLVAERTGMLEEAN) adopt a coiled-coil conformation. In terms of domain architecture, Guanylate cyclase spans 918–1048 (TILFSDIVGF…DTVNVSSRME (131 aa)). 3 residues coordinate Mg(2+): aspartate 923, isoleucine 924, and aspartate 967.

This sequence belongs to the adenylyl cyclase class-4/guanylyl cyclase family. In terms of tissue distribution, expressed specifically in AFD sensory neurons.

It localises to the cell membrane. It is found in the cell projection. Its subcellular location is the cilium. The catalysed reaction is GTP = 3',5'-cyclic GMP + diphosphate. Functionally, guanylate cyclase involved in the production of the second messenger cGMP. Regulates thermotaxis responses in AFD sensory neurons. May regulate AFD neuronal activity such as calcium responses to temperature gradients. This Caenorhabditis elegans protein is Receptor-type guanylate cyclase gcy-18.